A 127-amino-acid chain; its full sequence is Aspartate 1-decarboxylase (127 aa).

Catalysis depends on Ser-25, which acts as the Schiff-base intermediate with substrate; via pyruvic acid. Ser-25 is modified (pyruvic acid (Ser)). Thr-57 serves as a coordination point for substrate. The active-site Proton donor is Tyr-58. Residue 73–75 coordinates substrate; it reads GSA.

It belongs to the PanD family. As to quaternary structure, heterooctamer of four alpha and four beta subunits. It depends on pyruvate as a cofactor. Post-translationally, is synthesized initially as an inactive proenzyme, which is activated by self-cleavage at a specific serine bond to produce a beta-subunit with a hydroxyl group at its C-terminus and an alpha-subunit with a pyruvoyl group at its N-terminus.

The protein resides in the cytoplasm. The catalysed reaction is L-aspartate + H(+) = beta-alanine + CO2. It participates in cofactor biosynthesis; (R)-pantothenate biosynthesis; beta-alanine from L-aspartate: step 1/1. Catalyzes the pyruvoyl-dependent decarboxylation of aspartate to produce beta-alanine. This Polaromonas naphthalenivorans (strain CJ2) protein is Aspartate 1-decarboxylase.